We begin with the raw amino-acid sequence, 247 residues long: GTP cyclohydrolase 1 type 2 homolog (247 aa).

The a divalent metal cation site is built by His-63, His-64, Asp-101, His-215, and Glu-219.

The protein belongs to the GTP cyclohydrolase I type 2/NIF3 family. Homohexamer.

In Yersinia pestis, this protein is GTP cyclohydrolase 1 type 2 homolog.